The chain runs to 102 residues: Nucleoid-associated protein WS1681 (102 aa).

This sequence belongs to the YbaB/EbfC family. Homodimer.

The protein localises to the cytoplasm. It is found in the nucleoid. Binds to DNA and alters its conformation. May be involved in regulation of gene expression, nucleoid organization and DNA protection. The chain is Nucleoid-associated protein WS1681 from Wolinella succinogenes (strain ATCC 29543 / DSM 1740 / CCUG 13145 / JCM 31913 / LMG 7466 / NCTC 11488 / FDC 602W) (Vibrio succinogenes).